A 180-amino-acid chain; its full sequence is Translation initiation factor IF-3 (180 aa).

Belongs to the IF-3 family. In terms of assembly, monomer.

Its subcellular location is the cytoplasm. In terms of biological role, IF-3 binds to the 30S ribosomal subunit and shifts the equilibrium between 70S ribosomes and their 50S and 30S subunits in favor of the free subunits, thus enhancing the availability of 30S subunits on which protein synthesis initiation begins. The chain is Translation initiation factor IF-3 from Caldanaerobacter subterraneus subsp. tengcongensis (strain DSM 15242 / JCM 11007 / NBRC 100824 / MB4) (Thermoanaerobacter tengcongensis).